Reading from the N-terminus, the 911-residue chain is General transcription factor 3C polypeptide 2 (911 aa).

2 disordered regions span residues 24 to 187 (DSPG…RRRA) and 205 to 297 (ALPA…MAPN). The span at 35–46 (DVKTSSEMTSAE) shows a compositional bias: polar residues. A Phosphoserine modification is found at S63. Basic and acidic residues predominate over residues 64 to 81 (PDQRRLPPEQESLSRLEQ). The segment covering 92-112 (SKPRASKPGRKRGGRTRKGPK) has biased composition (basic residues). A compositionally biased stretch (pro residues) spans 114-123 (PQQPNPPSAP). A phosphoserine mark is found at S132, S165, S167, S220, and S260. A compositionally biased stretch (acidic residues) spans 253–262 (EAEDVEESEG). Low complexity predominate over residues 263–277 (PSESSSEPEPVVPRS). WD repeat units follow at residues 366–426 (PEDG…MNET), 427–483 (HPLS…AWEL), 484–535 (PGTP…IYKV), 536–603 (QCVA…SLKL), 604–654 (YPFQ…NSIK), and 655–690 (RFLSTELAWLLPYNGVTVAQDNCYASYGLCGIHYID). S597 is subject to Phosphoserine. The disordered stretch occupies residues 765 to 785 (SPEGPDHSSASSGVPNPPKAR). 3 positions are modified to phosphoserine: S871, S892, and S893. The interval 889-911 (FQPSSPTRRPGFSPTSHRLLPTP) is disordered. T895 is subject to Phosphothreonine. At S901 the chain carries Phosphoserine.

In terms of assembly, part of the TFIIIC subcomplex TFIIIC2, consisting of six subunits, GTF3C1, GTF3C2, GTF3C3, GTF3C4, GTF3C5 and GTF3C6.

Its subcellular location is the nucleus. In terms of biological role, required for RNA polymerase III-mediated transcription. Component of TFIIIC that initiates transcription complex assembly on tRNA and is required for transcription of 5S rRNA and other stable nuclear and cytoplasmic RNAs. May play a direct role in stabilizing interactions of TFIIIC2 with TFIIIC1. The chain is General transcription factor 3C polypeptide 2 (GTF3C2) from Homo sapiens (Human).